Consider the following 140-residue polypeptide: Natriuretic peptides A (140 aa).

The signal sequence occupies residues 1-24 (MDTRGSFSCGFLLLLLIQLQPSRA). The propeptide occupies 25–111 (NPIYNLSPAK…KRLRGVQMPR (87 aa)). The tract at residues 55–94 (ALESNPDLQEPQTQEEIPPELTDDSDEQKAEPKLASNTPL) is disordered. Residues 71–80 (IPPELTDDSD) show a composition bias toward acidic residues. The cysteines at positions 118 and 134 are disulfide-linked.

The protein belongs to the natriuretic peptide family. Cleaved by CORIN upon secretion to produce the functional hormone.

It localises to the secreted. In terms of biological role, hormone playing a key role in cardiovascular homeostasis through regulation of natriuresis, diuresis, and vasodilation. Specifically binds and stimulates the cGMP production of the NPR1 receptor. Binds the clearance receptor NPR3. This chain is Natriuretic peptides A (NPPA), found in Gallus gallus (Chicken).